A 41-amino-acid polypeptide reads, in one-letter code: Large ribosomal subunit protein bL36 (41 aa).

It belongs to the bacterial ribosomal protein bL36 family.

This chain is Large ribosomal subunit protein bL36, found in Rickettsia africae (strain ESF-5).